The primary structure comprises 245 residues: 1-(5-phosphoribosyl)-5-[(5-phosphoribosylamino)methylideneamino] imidazole-4-carboxamide isomerase (245 aa).

Residue D7 is the Proton acceptor of the active site. D129 functions as the Proton donor in the catalytic mechanism.

The protein belongs to the HisA/HisF family.

Its subcellular location is the cytoplasm. It carries out the reaction 1-(5-phospho-beta-D-ribosyl)-5-[(5-phospho-beta-D-ribosylamino)methylideneamino]imidazole-4-carboxamide = 5-[(5-phospho-1-deoxy-D-ribulos-1-ylimino)methylamino]-1-(5-phospho-beta-D-ribosyl)imidazole-4-carboxamide. It functions in the pathway amino-acid biosynthesis; L-histidine biosynthesis; L-histidine from 5-phospho-alpha-D-ribose 1-diphosphate: step 4/9. The sequence is that of 1-(5-phosphoribosyl)-5-[(5-phosphoribosylamino)methylideneamino] imidazole-4-carboxamide isomerase from Shewanella putrefaciens (strain CN-32 / ATCC BAA-453).